The primary structure comprises 399 residues: Elongation factor Tu (399 aa).

Residues 10–204 (KPHVNIGTIG…AVDASIPEPE (195 aa)) enclose the tr-type G domain. The tract at residues 19-26 (GHVDHGKT) is G1. 19-26 (GHVDHGKT) lines the GTP pocket. Threonine 26 serves as a coordination point for Mg(2+). The tract at residues 60-64 (GITIN) is G2. The G3 stretch occupies residues 81–84 (DCPG). Residues 81–85 (DCPGH) and 136–139 (NKCD) each bind GTP. The segment at 136-139 (NKCD) is G4. Residues 174 to 176 (SGL) form a G5 region.

The protein belongs to the TRAFAC class translation factor GTPase superfamily. Classic translation factor GTPase family. EF-Tu/EF-1A subfamily. In terms of assembly, monomer.

The protein resides in the cytoplasm. It catalyses the reaction GTP + H2O = GDP + phosphate + H(+). Its function is as follows. GTP hydrolase that promotes the GTP-dependent binding of aminoacyl-tRNA to the A-site of ribosomes during protein biosynthesis. In Prochlorococcus marinus (strain MIT 9515), this protein is Elongation factor Tu.